The primary structure comprises 377 residues: Palmitoyltransferase ZDHHC16 (377 aa).

Residues 1–77 (MRGQRSLLLG…VYWLVDNVIR (77 aa)) lie on the Cytoplasmic side of the membrane. The chain crosses the membrane as a helical span at residues 78 to 98 (WFGVVFVVLVIVLTGSIVAIA). Residues 99-116 (YLCVLPLILRTYSVPRLC) are Lumenal-facing. A helical transmembrane segment spans residues 117 to 137 (WHFFYSHWNLILIVFHYYQAI). Over 138-198 (TTPPGYPPQG…NNCVGHYNHR (61 aa)) the chain is Cytoplasmic. In terms of domain architecture, DHHC spans 155–205 (SICKKCIYPKPARTHHCSICNRCVLKMDHHCPWLNNCVGHYNHRYFFSFCF). Catalysis depends on C185, which acts as the S-palmitoyl cysteine intermediate. A helical transmembrane segment spans residues 199 to 219 (YFFSFCFFMTLGCVYCSYGSW). At 220 to 266 (DLFREAYAAIEKMKQLDKNKLQAVANQTYHQTPPPIFSFRERMTHKS) the chain is on the lumenal side. A helical membrane pass occupies residues 267–287 (LVYLWFLCSSVALALGALTVW). Residues 288 to 377 (HAVLISRGET…TAHSASVMAV (90 aa)) lie on the Cytoplasmic side of the membrane.

This sequence belongs to the DHHC palmitoyltransferase family. In terms of assembly, interacts with ABL1. Interacts with COPS5/JAB1.

Its subcellular location is the endoplasmic reticulum membrane. It catalyses the reaction L-cysteinyl-[protein] + hexadecanoyl-CoA = S-hexadecanoyl-L-cysteinyl-[protein] + CoA. In terms of biological role, palmitoyl acyltransferase that mediates palmitoylation of proteins such as PLN and ZDHHC6. Required during embryonic heart development and cardiac function, possibly by mediating palmitoylation of PLN, thereby affecting PLN phosphorylation and homooligomerization. Also required for eye development. Palmitoylates ZDHHC6, affecting the quaternary assembly of ZDHHC6, its localization, stability and function. May play a role in DNA damage response. May be involved in apoptosis regulation. Involved in the proliferation of neural stem cells by regulating the FGF/ERK pathway. The sequence is that of Palmitoyltransferase ZDHHC16 from Macaca fascicularis (Crab-eating macaque).